The sequence spans 208 residues: 28 kDa heat- and acid-stable phosphoprotein homolog (208 aa).

2 disordered regions span residues 1–133 (MAGG…VTKK) and 145–208 (LSRR…LGLA). The segment covering 16-44 (FGRDYERSKGKISRDRVYDEEDIIKRNQE) has biased composition (basic and acidic residues). Composition is skewed to low complexity over residues 52-69 (GSES…NKSK) and 84-100 (RNPN…PTTK). Residues 105–121 (SDSEDDSDKESDSEDEI) show a composition bias toward acidic residues. A coiled-coil region spans residues 137–206 (INVNAKVELS…EKMAERRRLG (70 aa)). Basic and acidic residues-rich tracts occupy residues 145-154 (LSRREKEELA) and 162-208 (QNEK…LGLA).

This sequence belongs to the PDAP1 family.

The sequence is that of 28 kDa heat- and acid-stable phosphoprotein homolog from Dictyostelium discoideum (Social amoeba).